Reading from the N-terminus, the 910-residue chain is UPF0182 protein Acid_6445 (910 aa).

7 helical membrane-spanning segments follow: residues 17 to 37 (ITLL…AGYA), 56 to 76 (LYYG…ALWI), 101 to 121 (LALL…WTVV), 157 to 177 (LLRS…WIAA), 210 to 229 (FLRG…FYLG), 252 to 272 (IGLP…AFVA), and 276 to 296 (WFLA…PRIV).

The protein belongs to the UPF0182 family.

The protein resides in the cell membrane. The polypeptide is UPF0182 protein Acid_6445 (Solibacter usitatus (strain Ellin6076)).